The following is a 331-amino-acid chain: 2-keto-3-deoxygluconate permease (331 aa).

Helical transmembrane passes span 10–30 (IPGG…TLAP), 42–62 (GMIS…GASI), 77–97 (LVLT…MFIP), 100–120 (GIQT…AMDM), 141–161 (AFVL…LGSA), 163–183 (LASF…IGFA), 200–220 (PVLI…NVIM), 224–244 (LLGI…LIIA), 254–274 (TAGV…MIIA), and 289–309 (ALVA…TALY).

Belongs to the KdgT transporter family.

It localises to the cell inner membrane. It carries out the reaction 2-dehydro-3-deoxy-D-gluconate(in) + H(+)(in) = 2-dehydro-3-deoxy-D-gluconate(out) + H(+)(out). Its function is as follows. Catalyzes the proton-dependent uptake of 2-keto-3-deoxygluconate (KDG) into the cell. The protein is 2-keto-3-deoxygluconate permease of Enterobacter sp. (strain 638).